A 508-amino-acid polypeptide reads, in one-letter code: Photosystem II CP47 reaction center protein (508 aa).

The next 6 helical transmembrane spans lie at 21–36, 101–115, 140–156, 203–218, 237–252, and 457–472; these read SVHI…WAGS, IVFS…IWHW, GIHL…FGAF, IAAG…FHLS, VLSS…AFIV, and SFAL…HGAR.

The protein belongs to the PsbB/PsbC family. PsbB subfamily. As to quaternary structure, PSII is composed of 1 copy each of membrane proteins PsbA, PsbB, PsbC, PsbD, PsbE, PsbF, PsbH, PsbI, PsbJ, PsbK, PsbL, PsbM, PsbT, PsbX, PsbY, PsbZ, Psb30/Ycf12, at least 3 peripheral proteins of the oxygen-evolving complex and a large number of cofactors. It forms dimeric complexes. The cofactor is Binds multiple chlorophylls. PSII binds additional chlorophylls, carotenoids and specific lipids..

The protein resides in the plastid. The protein localises to the chloroplast thylakoid membrane. Functionally, one of the components of the core complex of photosystem II (PSII). It binds chlorophyll and helps catalyze the primary light-induced photochemical processes of PSII. PSII is a light-driven water:plastoquinone oxidoreductase, using light energy to abstract electrons from H(2)O, generating O(2) and a proton gradient subsequently used for ATP formation. The protein is Photosystem II CP47 reaction center protein of Amborella trichopoda.